Consider the following 686-residue polypeptide: MHSDSDDYFSGDDDDFDRQQEIARSAFADMCHDWERNQKYDRALQLTIERLHCEGKEAHVLDIGTGSGLLSMMAVRAGADSVTACEAFRPMADCAERVIASNGMGDRIRLVKKKSTELKVGAGKDMERKANVLVTELFDTELIGEGAIATYRHALQFLLEEGCRVIPDKATVFAQVVECPLAMSWQTPKLLCSSDGDVLLRVPEEMVNCRGSSAVFDVQLSQLPLESFNALSEPIPVFEFDWSSREALKFKRHSRNLLKVQSSGIPQAVFMWWDLKMDLEGTVLLSCAPFWAHPDFEGLKTQKQNDSIPEPNLIPWRDHWMQAIYFLPHSKTPLAKGEEIALDAFHDEFSWWFGLNDLSLDPGHCSCGMHIAYSRSRIGQLNDGPRNKRILNYLEEVLDKNSVVLVLGDGSLLGLSIRAMGAKKVILVETNQTSRHCMERFVEHNGLENVEILSCLDDLTPDATADITHIFGEPFFTSAILPWENAIQFIWELNRVKALLNHEVSVIPHSFSIYGVAVEFLDLQKISAPLGTCEGFDLSLMDRMIEEHSKVADSPVEAQPLWEYPCLPLGPKCKMITINVAEGSQNQLEQGKITLTRHHEIKECNGIALWAEWHMGKNVSPKNTISSGPLSVIDEASELPVRPLQWNSNWRQGVHLLRKPLEESKMFLSWTVKYNAQLKTCYFKFD.

SAM-dependent MTase PRMT-type domains follow at residues serine 5–tryptophan 352 and aspartate 357–aspartate 686.

The protein belongs to the class I-like SAM-binding methyltransferase superfamily. Protein arginine N-methyltransferase family. PRMT7 subfamily.

Its function is as follows. Essential arginine methyltransferase that can both catalyze the formation of omega-N monomethylarginine (MMA) and symmetrical dimethylarginine (sDMA). Specifically mediates the symmetrical dimethylation of arginine residues in the small nuclear ribonucleoproteins SmD1 and SmD3. The chain is Protein arginine N-methyltransferase 7 (Art7) from Aedes aegypti (Yellowfever mosquito).